Consider the following 273-residue polypeptide: Thiazole synthase (273 aa).

Lys110 (schiff-base intermediate with DXP) is an active-site residue. 1-deoxy-D-xylulose 5-phosphate contacts are provided by residues Gly171, Ala197 to Gly198, and Asn219 to Thr220. Residues Met251–Pro273 form a disordered region.

This sequence belongs to the ThiG family. Homotetramer. Forms heterodimers with either ThiH or ThiS.

It localises to the cytoplasm. It catalyses the reaction [ThiS sulfur-carrier protein]-C-terminal-Gly-aminoethanethioate + 2-iminoacetate + 1-deoxy-D-xylulose 5-phosphate = [ThiS sulfur-carrier protein]-C-terminal Gly-Gly + 2-[(2R,5Z)-2-carboxy-4-methylthiazol-5(2H)-ylidene]ethyl phosphate + 2 H2O + H(+). Its pathway is cofactor biosynthesis; thiamine diphosphate biosynthesis. Its function is as follows. Catalyzes the rearrangement of 1-deoxy-D-xylulose 5-phosphate (DXP) to produce the thiazole phosphate moiety of thiamine. Sulfur is provided by the thiocarboxylate moiety of the carrier protein ThiS. In vitro, sulfur can be provided by H(2)S. This is Thiazole synthase from Variovorax paradoxus (strain S110).